The chain runs to 271 residues: Ribosomal RNA small subunit methyltransferase A (271 aa).

S-adenosyl-L-methionine-binding residues include His-11, Leu-13, Gly-38, Glu-58, Asp-86, and Asn-101.

The protein belongs to the class I-like SAM-binding methyltransferase superfamily. rRNA adenine N(6)-methyltransferase family. RsmA subfamily.

It localises to the cytoplasm. It catalyses the reaction adenosine(1518)/adenosine(1519) in 16S rRNA + 4 S-adenosyl-L-methionine = N(6)-dimethyladenosine(1518)/N(6)-dimethyladenosine(1519) in 16S rRNA + 4 S-adenosyl-L-homocysteine + 4 H(+). Specifically dimethylates two adjacent adenosines (A1518 and A1519) in the loop of a conserved hairpin near the 3'-end of 16S rRNA in the 30S particle. May play a critical role in biogenesis of 30S subunits. The chain is Ribosomal RNA small subunit methyltransferase A from Helicobacter pylori (strain ATCC 700392 / 26695) (Campylobacter pylori).